Consider the following 96-residue polypeptide: Putative pterin-4-alpha-carbinolamine dehydratase (96 aa).

The protein belongs to the pterin-4-alpha-carbinolamine dehydratase family.

It catalyses the reaction (4aS,6R)-4a-hydroxy-L-erythro-5,6,7,8-tetrahydrobiopterin = (6R)-L-erythro-6,7-dihydrobiopterin + H2O. This chain is Putative pterin-4-alpha-carbinolamine dehydratase, found in Synechocystis sp. (strain ATCC 27184 / PCC 6803 / Kazusa).